The primary structure comprises 36 residues: Egg-laying-like hormone (36 aa).

Residue Lys36 is modified to Lysine amide.

In terms of tissue distribution, supra, subesophageal ganglia and segmental ganglia of the ventral nerve cord and brain.

In terms of biological role, may be involved in leech reproduction. This is Egg-laying-like hormone from Theromyzon tessulatum (Duck leech).